The following is a 224-amino-acid chain: MSDKKAVILLSGGLDSATVVAMARAEGYACYSMSFDYGQRHRAELQAAERVARQLGVVEHKVVGLNLNGIGGSALTDSSIAVPETPGEGIPVTYVPARNTVFLSLALGWAEVLGARDIFIGVNAVDYSGYPDCRPEFVEAFERMANLATKAGVEGQGFAIRAPLQQMSKGEIIQAGMRLGVDYALTVSCYQADDDGRACGKCDSCRLRAAGFAAAGVPDATRYF.

10–20 (LSGGLDSATVV) contacts ATP. Residues Cys-189, Cys-199, Cys-202, and Cys-205 each coordinate Zn(2+).

It belongs to the QueC family. Zn(2+) serves as cofactor.

The catalysed reaction is 7-carboxy-7-deazaguanine + NH4(+) + ATP = 7-cyano-7-deazaguanine + ADP + phosphate + H2O + H(+). It functions in the pathway purine metabolism; 7-cyano-7-deazaguanine biosynthesis. Functionally, catalyzes the ATP-dependent conversion of 7-carboxy-7-deazaguanine (CDG) to 7-cyano-7-deazaguanine (preQ(0)). The protein is 7-cyano-7-deazaguanine synthase of Ectopseudomonas mendocina (strain ymp) (Pseudomonas mendocina).